The following is a 499-amino-acid chain: MYVSSLKFPFLGIGVWKGVRLWRQRSLGTSACALKQDDFIKELDQNFVRLQKKLMDSLPSSDWSPFTPTGDLPPERADVVIVGGGVMGWSIAYWLKQKENRRGALKVVVVERDPTYSRASTVLSAGGIRQQFSRPENIQMSLFSAQFLRNINEHLGVVNEDRIDIQFNPSGYLFLASEEGATIMEENYNVQRECGAQVTLMLPDQLKKKFPWINTNGVALASYGLENEGWFDPWTLLNAFRRKALSMGVYQCHGEVTDFSTAKREMITADGDPVTFSRIGHVTVQMPNSLESQSVECSLVINAAGAWSSKVAELAGIGTGPSNSLEGIKLPVEPKKRYVYVVHCPNGPGLDCPLLIDNSGAYFRREGLGGNYIAGKSPAEEEEPDISNMEVDHDFFQEKVWPLLAHRVPAFESLKVKTSWAGYYDYNTYDQNGVVGMHPLVNNLFFATGFSGHGLQHSPAVGRAVAELIVDGGFKTLNLSSFSFRRFWSQEPLLERNIV.

Residues 75 to 95 traverse the membrane as a helical segment; sequence ERADVVIVGGGVMGWSIAYWL.

FAD serves as cofactor.

It is found in the mitochondrion inner membrane. Its function is as follows. Required for the assembly of the mitochondrial membrane respiratory chain NADH dehydrogenase (Complex I). Involved in mid-late stages of complex I assembly. This chain is FAD-dependent oxidoreductase domain-containing protein 1 (foxred1), found in Xenopus laevis (African clawed frog).